Consider the following 545-residue polypeptide: CTP synthase (545 aa).

The amidoligase domain stretch occupies residues 1 to 266 (MTTNYIFVTG…DDYICKRFSL (266 aa)). Ser-14 serves as a coordination point for CTP. Ser-14 lines the UTP pocket. ATP contacts are provided by residues 15-20 (SLGKGI) and Asp-72. Positions 72 and 140 each coordinate Mg(2+). CTP is bound by residues 147–149 (DIE), 187–192 (KTKPTQ), and Lys-223. Residues 187-192 (KTKPTQ) and Lys-223 contribute to the UTP site. 239 to 241 (KDV) serves as a coordination point for ATP. Positions 291 to 542 (TIGMVGKYIE…VKAASEYQKR (252 aa)) constitute a Glutamine amidotransferase type-1 domain. Gly-352 contributes to the L-glutamine binding site. Residue Cys-379 is the Nucleophile; for glutamine hydrolysis of the active site. L-glutamine contacts are provided by residues 380-383 (LGMQ), Glu-403, and Arg-470. Catalysis depends on residues His-515 and Glu-517.

Belongs to the CTP synthase family. As to quaternary structure, homotetramer.

The catalysed reaction is UTP + L-glutamine + ATP + H2O = CTP + L-glutamate + ADP + phosphate + 2 H(+). The enzyme catalyses L-glutamine + H2O = L-glutamate + NH4(+). It carries out the reaction UTP + NH4(+) + ATP = CTP + ADP + phosphate + 2 H(+). It participates in pyrimidine metabolism; CTP biosynthesis via de novo pathway; CTP from UDP: step 2/2. With respect to regulation, allosterically activated by GTP, when glutamine is the substrate; GTP has no effect on the reaction when ammonia is the substrate. The allosteric effector GTP functions by stabilizing the protein conformation that binds the tetrahedral intermediate(s) formed during glutamine hydrolysis. Inhibited by the product CTP, via allosteric rather than competitive inhibition. In terms of biological role, catalyzes the ATP-dependent amination of UTP to CTP with either L-glutamine or ammonia as the source of nitrogen. Regulates intracellular CTP levels through interactions with the four ribonucleotide triphosphates. The chain is CTP synthase from Enterobacter sp. (strain 638).